We begin with the raw amino-acid sequence, 183 residues long: Protein jagunal homolog 1 (183 aa).

Over 1 to 39 (MASRAGPRAAGTDGSDFQHRERVAMHYQMSVTLKYEIKK) the chain is Cytoplasmic. Phosphoserine is present on Ser-3. A helical transmembrane segment spans residues 40 to 60 (LIYVHLVIWLLLVAKMSVGHL). At 61-71 (RLLSHDQVAMP) the chain is on the lumenal side. Residues 72–92 (YQWEYPYLLSVVPSLLGLLSF) traverse the membrane as a helical segment. Topologically, residues 93–96 (PRNN) are cytoplasmic. Residues 97–117 (ISYLVLSMISMGLFSIAPLIY) traverse the membrane as a helical segment. Over 118 to 137 (GSMEMFPAAQQLYRHGKAYR) the chain is Lumenal. The chain crosses the membrane as a helical span at residues 138 to 158 (FLFGFSAVSVMYLVLVLAVQV). At 159–183 (HAWQLYYSKKLLDSWFTSTQEKKRK) the chain is on the cytoplasmic side.

The protein belongs to the jagunal family. In terms of assembly, interacts with COPA, COPB2 and COPG2.

It is found in the endoplasmic reticulum membrane. In terms of biological role, endoplasmic reticulum transmembrane protein involved in vesicle-mediated transport, which is required for neutrophil function. Required for vesicle-mediated transport; it is however unclear whether it is involved in early secretory pathway or intracellular protein transport. Acts as a regulator of neutrophil function, probably via its role in vesicle-mediated transport: required for defense against fungal pathogens and for granulocyte colony-stimulating factor (GM-CSF) signaling pathway; possibly by regulating glycosylation and/or targeting of proteins contributing to the viability and migration of neutrophils. The sequence is that of Protein jagunal homolog 1 (JAGN1) from Bos taurus (Bovine).